The following is a 998-amino-acid chain: Beta-galactosidase (998 aa).

Residue Glu-431 is the Proton donor of the active site. Glu-508 acts as the Nucleophile in catalysis.

This sequence belongs to the glycosyl hydrolase 2 family.

It catalyses the reaction Hydrolysis of terminal non-reducing beta-D-galactose residues in beta-D-galactosides.. The chain is Beta-galactosidase (lacZ) from Lactococcus lactis subsp. lactis (strain IL1403) (Streptococcus lactis).